The chain runs to 410 residues: Protein LTV1 homolog (410 aa).

2 disordered regions span residues 142–165 (VYRSTRRGEDSEEEEDDDEDDEMY) and 325–378 (EMDI…ARKL). Composition is skewed to acidic residues over residues 151-165 (DSEEEEDDDEDDEMY) and 325-345 (EMDIAEEDEDDDEDMEDDDDK). The segment covering 357 to 366 (PKNETPEQRS) has biased composition (basic and acidic residues). The stretch at 363-389 (EQRSLRKKAVKEARKLRRVEKKANKTM) forms a coiled coil. The segment covering 367-378 (LRKKAVKEARKL) has biased composition (basic residues).

It belongs to the LTV1 family.

In Caenorhabditis elegans, this protein is Protein LTV1 homolog.